Reading from the N-terminus, the 149-residue chain is NADH-ubiquinone oxidoreductase chain 6 (149 aa).

4 consecutive transmembrane segments (helical) span residues 23-43 (ILML…FYFI), 51-71 (MMMI…MISL), 83-103 (LSVT…MTKL), and 114-134 (VNFV…LTII).

This sequence belongs to the complex I subunit 6 family.

The protein localises to the mitochondrion membrane. It carries out the reaction a ubiquinone + NADH + 5 H(+)(in) = a ubiquinol + NAD(+) + 4 H(+)(out). In terms of biological role, core subunit of the mitochondrial membrane respiratory chain NADH dehydrogenase (Complex I) that is believed to belong to the minimal assembly required for catalysis. Complex I functions in the transfer of electrons from NADH to the respiratory chain. The immediate electron acceptor for the enzyme is believed to be ubiquinone. In Rhipicephalus sanguineus (Brown dog tick), this protein is NADH-ubiquinone oxidoreductase chain 6 (ND6).